We begin with the raw amino-acid sequence, 62 residues long: Photosystem II reaction center protein Z (62 aa).

Transmembrane regions (helical) follow at residues 8-28 (AVFALIATSFLLVIGVPVVLA) and 41-61 (FSGASLWIGLVFLVGILNSFI).

This sequence belongs to the PsbZ family. As to quaternary structure, PSII is composed of 1 copy each of membrane proteins PsbA, PsbB, PsbC, PsbD, PsbE, PsbF, PsbH, PsbI, PsbJ, PsbK, PsbL, PsbM, PsbT, PsbY, PsbZ, Psb30/Ycf12, at least 3 peripheral proteins of the oxygen-evolving complex and a large number of cofactors. It forms dimeric complexes.

The protein resides in the plastid. Its subcellular location is the chloroplast thylakoid membrane. Functionally, may control the interaction of photosystem II (PSII) cores with the light-harvesting antenna, regulates electron flow through the 2 photosystem reaction centers. PSII is a light-driven water plastoquinone oxidoreductase, using light energy to abstract electrons from H(2)O, generating a proton gradient subsequently used for ATP formation. The polypeptide is Photosystem II reaction center protein Z (Anthoceros angustus (Hornwort)).